We begin with the raw amino-acid sequence, 131 residues long: Small ribosomal subunit protein eS8 (131 aa).

The segment at 1–37 (MKLGAFYKGGDLKKPSGGKKRRVRRTKKKALGGGPPQ) is disordered. Positions 16 to 30 (SGGKKRRVRRTKKKA) are enriched in basic residues.

It belongs to the eukaryotic ribosomal protein eS8 family. As to quaternary structure, part of the 30S ribosomal subunit.

In Pyrobaculum neutrophilum (strain DSM 2338 / JCM 9278 / NBRC 100436 / V24Sta) (Thermoproteus neutrophilus), this protein is Small ribosomal subunit protein eS8.